A 265-amino-acid chain; its full sequence is 4-diphosphocytidyl-2-C-methyl-D-erythritol kinase (265 aa).

Residue lysine 8 is part of the active site. An ATP-binding site is contributed by 95–105 (PIGAGLGGGSS). Aspartate 135 is a catalytic residue.

The protein belongs to the GHMP kinase family. IspE subfamily.

The catalysed reaction is 4-CDP-2-C-methyl-D-erythritol + ATP = 4-CDP-2-C-methyl-D-erythritol 2-phosphate + ADP + H(+). Its pathway is isoprenoid biosynthesis; isopentenyl diphosphate biosynthesis via DXP pathway; isopentenyl diphosphate from 1-deoxy-D-xylulose 5-phosphate: step 3/6. In terms of biological role, catalyzes the phosphorylation of the position 2 hydroxy group of 4-diphosphocytidyl-2C-methyl-D-erythritol. The chain is 4-diphosphocytidyl-2-C-methyl-D-erythritol kinase from Ureaplasma parvum serovar 3 (strain ATCC 27815 / 27 / NCTC 11736).